Here is a 53-residue protein sequence, read N- to C-terminus: FHVPDDRPCIKPGRCPLVPDATCTFVCKAADNDFGYECQHVWTFEGQRVGCYA.

Intrachain disulfides connect C9-C23, C15-C51, and C27-C38. A53 is a Zn(2+) binding site.

Functionally, metallocarboxypeptidase inhibitor. Has an inhibitory effect on bovine CPA1 and porcine CPB1. Does not inhibit D.melanogaster svr (carboxypeptidase D). Shows no activity against serine proteases subtilisin or bovine trypsin, cysteine protease papain, and aspartyl protease porcine pepsin. This chain is Metallocarboxypeptidase inhibitor b, found in Nerita versicolor (Four-tooth nerite).